Here is a 151-residue protein sequence, read N- to C-terminus: D-aminoacyl-tRNA deacylase (151 aa).

The short motif at 139–140 (GP) is the Gly-cisPro motif, important for rejection of L-amino acids element.

This sequence belongs to the DTD family. As to quaternary structure, homodimer.

The protein localises to the cytoplasm. It carries out the reaction glycyl-tRNA(Ala) + H2O = tRNA(Ala) + glycine + H(+). The catalysed reaction is a D-aminoacyl-tRNA + H2O = a tRNA + a D-alpha-amino acid + H(+). Functionally, an aminoacyl-tRNA editing enzyme that deacylates mischarged D-aminoacyl-tRNAs. Also deacylates mischarged glycyl-tRNA(Ala), protecting cells against glycine mischarging by AlaRS. Acts via tRNA-based rather than protein-based catalysis; rejects L-amino acids rather than detecting D-amino acids in the active site. By recycling D-aminoacyl-tRNA to D-amino acids and free tRNA molecules, this enzyme counteracts the toxicity associated with the formation of D-aminoacyl-tRNA entities in vivo and helps enforce protein L-homochirality. This is D-aminoacyl-tRNA deacylase from Symbiobacterium thermophilum (strain DSM 24528 / JCM 14929 / IAM 14863 / T).